The sequence spans 424 residues: Gamma-glutamyl phosphate reductase (424 aa).

Belongs to the gamma-glutamyl phosphate reductase family.

It is found in the cytoplasm. The catalysed reaction is L-glutamate 5-semialdehyde + phosphate + NADP(+) = L-glutamyl 5-phosphate + NADPH + H(+). Its pathway is amino-acid biosynthesis; L-proline biosynthesis; L-glutamate 5-semialdehyde from L-glutamate: step 2/2. Its function is as follows. Catalyzes the NADPH-dependent reduction of L-glutamate 5-phosphate into L-glutamate 5-semialdehyde and phosphate. The product spontaneously undergoes cyclization to form 1-pyrroline-5-carboxylate. The protein is Gamma-glutamyl phosphate reductase of Parvibaculum lavamentivorans (strain DS-1 / DSM 13023 / NCIMB 13966).